Here is a 399-residue protein sequence, read N- to C-terminus: S-adenosylmethionine synthase (399 aa).

An ATP-binding site is contributed by histidine 15. Mg(2+) is bound at residue aspartate 17. Residue glutamate 43 participates in K(+) binding. 2 residues coordinate L-methionine: glutamate 56 and glutamine 99. Positions 99 to 109 (QSADIAQGVDN) are flexible loop. ATP contacts are provided by residues 174–176 (DGK), 244–245 (RF), aspartate 253, 259–260 (RK), alanine 276, and lysine 280. Position 253 (aspartate 253) interacts with L-methionine. Lysine 284 serves as a coordination point for L-methionine.

This sequence belongs to the AdoMet synthase family. Homotetramer; dimer of dimers. Mg(2+) is required as a cofactor. K(+) serves as cofactor.

It localises to the cytoplasm. It catalyses the reaction L-methionine + ATP + H2O = S-adenosyl-L-methionine + phosphate + diphosphate. Its pathway is amino-acid biosynthesis; S-adenosyl-L-methionine biosynthesis; S-adenosyl-L-methionine from L-methionine: step 1/1. In terms of biological role, catalyzes the formation of S-adenosylmethionine (AdoMet) from methionine and ATP. The overall synthetic reaction is composed of two sequential steps, AdoMet formation and the subsequent tripolyphosphate hydrolysis which occurs prior to release of AdoMet from the enzyme. In Salinispora tropica (strain ATCC BAA-916 / DSM 44818 / JCM 13857 / NBRC 105044 / CNB-440), this protein is S-adenosylmethionine synthase.